The chain runs to 80 residues: Large ribosomal subunit protein bL31B (80 aa).

This sequence belongs to the bacterial ribosomal protein bL31 family. Type B subfamily. In terms of assembly, part of the 50S ribosomal subunit.

This Xanthomonas campestris pv. campestris (strain 8004) protein is Large ribosomal subunit protein bL31B.